A 414-amino-acid polypeptide reads, in one-letter code: Meiotic driver wtf19 (414 aa).

Residues 1–94 form a disordered region; that stretch reads MKNKYYPVRT…RENHSSGTAD (94 aa). Positions 11–29 are enriched in basic and acidic residues; sequence SMDEMNAKNDNEIDLEKGP. Residues 57-72 are compositionally biased toward polar residues; the sequence is GANNPNLFNTDESTTP. 9 helical membrane-spanning segments follow: residues 99–119, 136–156, 170–190, 192–212, 222–242, 247–267, 284–304, 311–331, and 339–359; these read FLIKLLISFIPIFVLNVPAVC, WVYFGVWCAICLMIFISLWCF, VTVIFLAQCIKVTVISLAQCV, VTAIFLAQCIKVTVISLAQCV, CVKVTVISLAKCVKVISIGLF, EMMIIIWILWLIICCILFGCV, TISAVLFLIVSSVCIPIWTLW, LQVLGIHGIIAVLVNGLMSLF, and GYEIEGFVLFFTSSALFLYEM.

Belongs to the WTF family. In terms of assembly, homomer. Forms protein aggregates. The two isoforms can interact with each other and with themselves. High sequence similarity is required for their interaction.

It localises to the spore membrane. The protein localises to the vacuole membrane. Its subcellular location is the ascus epiplasm. The protein resides in the cytoplasm. It is found in the endoplasmic reticulum membrane. Promotes unequal transmission of alleles from the parental zygote to progeny spores by acting as poison/antidote system where the poison and antidote proteins are produced from the same locus; the poison component is trans-acting and targets all spores within an ascus whereas the antidote component is spore-specific, leading to poisoning of all progeny that do not inherit the allele. Functionally, localizes isoform 2 to the vacuole thereby facilitating its degradation. Its function is as follows. Forms toxic aggregates that disrupt spore maturation. This is Meiotic driver wtf19 from Schizosaccharomyces kambucha (Fission yeast).